We begin with the raw amino-acid sequence, 150 residues long: UPF0178 protein Shew_2726 (150 aa).

The protein belongs to the UPF0178 family.

This Shewanella loihica (strain ATCC BAA-1088 / PV-4) protein is UPF0178 protein Shew_2726.